The following is a 469-amino-acid chain: L-seryl-tRNA(Sec) selenium transferase (469 aa).

N6-(pyridoxal phosphate)lysine is present on Lys-298.

The protein belongs to the SelA family. It depends on pyridoxal 5'-phosphate as a cofactor.

It localises to the cytoplasm. It catalyses the reaction L-seryl-tRNA(Sec) + selenophosphate + H(+) = L-selenocysteinyl-tRNA(Sec) + phosphate. It participates in aminoacyl-tRNA biosynthesis; selenocysteinyl-tRNA(Sec) biosynthesis; selenocysteinyl-tRNA(Sec) from L-seryl-tRNA(Sec) (bacterial route): step 1/1. Its function is as follows. Converts seryl-tRNA(Sec) to selenocysteinyl-tRNA(Sec) required for selenoprotein biosynthesis. The sequence is that of L-seryl-tRNA(Sec) selenium transferase from Nitratidesulfovibrio vulgaris (strain ATCC 29579 / DSM 644 / CCUG 34227 / NCIMB 8303 / VKM B-1760 / Hildenborough) (Desulfovibrio vulgaris).